The sequence spans 277 residues: MEMO1 family protein MTH_45 (277 aa).

It belongs to the MEMO1 family.

In Methanothermobacter thermautotrophicus (strain ATCC 29096 / DSM 1053 / JCM 10044 / NBRC 100330 / Delta H) (Methanobacterium thermoautotrophicum), this protein is MEMO1 family protein MTH_45.